The sequence spans 220 residues: Grancalcin (220 aa).

EF-hand domains are found at residues 51–86, 92–127, 122–157, and 158–193; these read SPAD…SGIS, FSLE…LNAW, AALN…MGYR, and LSPQ…ALTD. Ca(2+) contacts are provided by aspartate 105, aspartate 107, threonine 109, lysine 111, glutamate 116, aspartate 135, aspartate 137, serine 139, threonine 141, and glutamate 146.

As to quaternary structure, homodimer. Interacts with SRI and LCP1.

It is found in the cytoplasm. The protein resides in the cytoplasmic granule membrane. Its function is as follows. Calcium-binding protein that may play a role in the adhesion of neutrophils to fibronectin. May play a role in the formation of focal adhesions. This chain is Grancalcin (Gca), found in Mus musculus (Mouse).